A 273-amino-acid polypeptide reads, in one-letter code: Tryptase (273 aa).

Positions 1–18 (MLKLLLLTLPLLSSLVHA) are cleaved as a signal peptide. The propeptide at 19–28 (APSLAMPREG) is activation peptide. Residues 29 to 270 (IVGGQEASGN…YLDWIYRYVP (242 aa)) form the Peptidase S1 domain. An N-linked (GlcNAc...) asparagine glycan is attached at N49. C57 and C73 are oxidised to a cystine. Residues H72 and D119 each act as charge relay system in the active site. 3 disulfides stabilise this stretch: C153–C228, C186–C209, and C218–C246. The active-site Charge relay system is S222.

This sequence belongs to the peptidase S1 family. Tryptase subfamily. In terms of assembly, homotetramer. Post-translationally, glycosylated. Mast cells.

It is found in the secreted. The catalysed reaction is Preferential cleavage: Arg-|-Xaa, Lys-|-Xaa, but with more restricted specificity than trypsin.. Tryptase is the major neutral protease present in mast cells and is secreted upon the coupled activation-degranulation response of this cell type. May play a role in innate immunity. This is Tryptase (Tpsab1) from Rattus norvegicus (Rat).